We begin with the raw amino-acid sequence, 512 residues long: 2,3-bisphosphoglycerate-independent phosphoglycerate mutase (512 aa).

Mn(2+) contacts are provided by aspartate 11 and serine 61. The active-site Phosphoserine intermediate is the serine 61. Substrate contacts are provided by residues histidine 122, 152–153 (RD), arginine 184, arginine 190, 259–262 (RADR), and lysine 332. Residues aspartate 399, histidine 403, aspartate 440, histidine 441, and histidine 459 each coordinate Mn(2+).

Belongs to the BPG-independent phosphoglycerate mutase family. As to quaternary structure, monomer. Mn(2+) serves as cofactor.

The enzyme catalyses (2R)-2-phosphoglycerate = (2R)-3-phosphoglycerate. Its pathway is carbohydrate degradation; glycolysis; pyruvate from D-glyceraldehyde 3-phosphate: step 3/5. In terms of biological role, catalyzes the interconversion of 2-phosphoglycerate and 3-phosphoglycerate. In Francisella philomiragia subsp. philomiragia (strain ATCC 25017 / CCUG 19701 / FSC 153 / O#319-036), this protein is 2,3-bisphosphoglycerate-independent phosphoglycerate mutase.